The primary structure comprises 440 residues: Chromosomal replication initiator protein DnaA (440 aa).

The domain I, interacts with DnaA modulators stretch occupies residues 1 to 74; sequence MNPSQILENL…VQSGNKAIIN (74 aa). The segment at 74 to 99 is domain II; it reads NIQAQSAKQSNKSTKIDIAHIKAQST. The segment at 100 to 316 is domain III, AAA+ region; sequence ILNPSFTFDS…GIIISLNAYA (217 aa). Residues G146, G148, K149, and T150 each coordinate ATP. Residues 317 to 440 form a domain IV, binds dsDNA region; it reads TILGQEITLE…KNKILVKSQS (124 aa).

It belongs to the DnaA family. Oligomerizes as a right-handed, spiral filament on DNA at oriC.

It is found in the cytoplasm. In terms of biological role, plays an essential role in the initiation and regulation of chromosomal replication. ATP-DnaA binds to the origin of replication (oriC) to initiate formation of the DNA replication initiation complex once per cell cycle. Binds the DnaA box (a 9 base pair repeat at the origin) and separates the double-stranded (ds)DNA. Forms a right-handed helical filament on oriC DNA; dsDNA binds to the exterior of the filament while single-stranded (ss)DNA is stabiized in the filament's interior. The ATP-DnaA-oriC complex binds and stabilizes one strand of the AT-rich DNA unwinding element (DUE), permitting loading of DNA polymerase. After initiation quickly degrades to an ADP-DnaA complex that is not apt for DNA replication. Binds acidic phospholipids. This chain is Chromosomal replication initiator protein DnaA, found in Campylobacter jejuni subsp. jejuni serotype O:23/36 (strain 81-176).